The chain runs to 465 residues: Eukaryotic translation initiation factor 3 subunit M (465 aa).

The PCI domain maps to Glu215–Tyr383. The tract at residues Ala429 to Asp465 is disordered. Basic and acidic residues-rich tracts occupy residues Ser433 to Arg448 and Gly455 to Asp465.

The protein belongs to the eIF-3 subunit M family. In terms of assembly, component of the eukaryotic translation initiation factor 3 (eIF-3) complex.

It is found in the cytoplasm. Component of the eukaryotic translation initiation factor 3 (eIF-3) complex, which is involved in protein synthesis of a specialized repertoire of mRNAs and, together with other initiation factors, stimulates binding of mRNA and methionyl-tRNAi to the 40S ribosome. The eIF-3 complex specifically targets and initiates translation of a subset of mRNAs involved in cell proliferation. The polypeptide is Eukaryotic translation initiation factor 3 subunit M (Coccidioides immitis (strain RS) (Valley fever fungus)).